Consider the following 143-residue polypeptide: MFLGTHTPRLDDKGRLILPARFRDQLLDGLVITRGQERCLYIFPMQEFQRMHEEMRQAPLTNKEARDYQRVFLSGASSELPDKQGRVTVPPLLRTYAGLERDVAVIGAGARVELWDLRTWESYLDEVEPAFADRREEVLPGVL.

SpoVT-AbrB domains lie at 5-47 (THTP…PMQE) and 76-119 (ASSE…DLRT).

It belongs to the MraZ family. In terms of assembly, forms oligomers.

The protein resides in the cytoplasm. Its subcellular location is the nucleoid. The chain is Transcriptional regulator MraZ from Kineococcus radiotolerans (strain ATCC BAA-149 / DSM 14245 / SRS30216).